The sequence spans 453 residues: Bifunctional protein GlmU (453 aa).

The pyrophosphorylase stretch occupies residues 1-225 (MNIVILAAGT…DWETLGVNSK (225 aa)). UDP-N-acetyl-alpha-D-glucosamine-binding positions include 6–9 (LAAG), Lys-20, Gln-71, 76–77 (GT), 98–100 (YGD), Gly-135, Glu-150, Asn-165, and Asn-223. A Mg(2+)-binding site is contributed by Asp-100. Residue Asn-223 coordinates Mg(2+). Positions 226–246 (AQLAELERIHQRNVADALLVE) are linker. Positions 247 to 453 (GVTLADPARV…GYVRPVKKKS (207 aa)) are N-acetyltransferase. Residues Arg-329 and Lys-347 each contribute to the UDP-N-acetyl-alpha-D-glucosamine site. The active-site Proton acceptor is the His-359. UDP-N-acetyl-alpha-D-glucosamine is bound by residues Tyr-362 and Asn-373. Residues Ala-376, 382–383 (NY), Ser-401, and Ala-419 contribute to the acetyl-CoA site.

In the N-terminal section; belongs to the N-acetylglucosamine-1-phosphate uridyltransferase family. The protein in the C-terminal section; belongs to the transferase hexapeptide repeat family. In terms of assembly, homotrimer. The cofactor is Mg(2+).

It localises to the cytoplasm. It carries out the reaction alpha-D-glucosamine 1-phosphate + acetyl-CoA = N-acetyl-alpha-D-glucosamine 1-phosphate + CoA + H(+). The catalysed reaction is N-acetyl-alpha-D-glucosamine 1-phosphate + UTP + H(+) = UDP-N-acetyl-alpha-D-glucosamine + diphosphate. It participates in nucleotide-sugar biosynthesis; UDP-N-acetyl-alpha-D-glucosamine biosynthesis; N-acetyl-alpha-D-glucosamine 1-phosphate from alpha-D-glucosamine 6-phosphate (route II): step 2/2. The protein operates within nucleotide-sugar biosynthesis; UDP-N-acetyl-alpha-D-glucosamine biosynthesis; UDP-N-acetyl-alpha-D-glucosamine from N-acetyl-alpha-D-glucosamine 1-phosphate: step 1/1. It functions in the pathway bacterial outer membrane biogenesis; LPS lipid A biosynthesis. In terms of biological role, catalyzes the last two sequential reactions in the de novo biosynthetic pathway for UDP-N-acetylglucosamine (UDP-GlcNAc). The C-terminal domain catalyzes the transfer of acetyl group from acetyl coenzyme A to glucosamine-1-phosphate (GlcN-1-P) to produce N-acetylglucosamine-1-phosphate (GlcNAc-1-P), which is converted into UDP-GlcNAc by the transfer of uridine 5-monophosphate (from uridine 5-triphosphate), a reaction catalyzed by the N-terminal domain. This is Bifunctional protein GlmU from Burkholderia vietnamiensis (strain G4 / LMG 22486) (Burkholderia cepacia (strain R1808)).